Here is a 608-residue protein sequence, read N- to C-terminus: Threonine--tRNA ligase (608 aa).

An editing domain region spans residues 1-143 (MRVLYIHAER…SFKPEEGRAD (143 aa)). Catalytic stretches follow at residues 194–490 (PKYL…PRLP) and 195–490 (KYLE…PRLP). Zn(2+) contacts are provided by cysteine 287, histidine 338, and histidine 459.

The protein belongs to the class-II aminoacyl-tRNA synthetase family. In terms of assembly, homodimer. Zn(2+) serves as cofactor.

It localises to the cytoplasm. It carries out the reaction tRNA(Thr) + L-threonine + ATP = L-threonyl-tRNA(Thr) + AMP + diphosphate + H(+). Its function is as follows. Catalyzes the attachment of threonine to tRNA(Thr) in a two-step reaction: L-threonine is first activated by ATP to form Thr-AMP and then transferred to the acceptor end of tRNA(Thr). Also edits incorrectly charged L-seryl-tRNA(Thr). The protein is Threonine--tRNA ligase of Pyrobaculum aerophilum (strain ATCC 51768 / DSM 7523 / JCM 9630 / CIP 104966 / NBRC 100827 / IM2).